A 500-amino-acid polypeptide reads, in one-letter code: Squalene epoxidase ERG1 (500 aa).

Residues Glu20–Ala40 traverse the membrane as a helical segment. FAD contacts are provided by residues Val30–Phe31, Glu50–Arg51, Arg58, Arg145, Asp332, and Met345. 2 helical membrane passes run Ala450–Phe470 and Leu474–Met494.

Belongs to the squalene monooxygenase family. The cofactor is FAD.

Its subcellular location is the microsome membrane. The protein resides in the endoplasmic reticulum membrane. It is found in the lipid droplet. It catalyses the reaction squalene + reduced [NADPH--hemoprotein reductase] + O2 = (S)-2,3-epoxysqualene + oxidized [NADPH--hemoprotein reductase] + H2O + H(+). It participates in terpene metabolism; lanosterol biosynthesis; lanosterol from farnesyl diphosphate: step 2/3. Its pathway is steroid metabolism; ergosterol biosynthesis. In terms of biological role, squalene epoxidase; part of the third module of ergosterol biosynthesis pathway that includes the late steps of the pathway. ERG1 catalyzes the epoxidation of squalene into 2,3-epoxysqualene. The third module or late pathway involves the ergosterol synthesis itself through consecutive reactions that mainly occur in the endoplasmic reticulum (ER) membrane. Firstly, the squalene synthase ERG9 catalyzes the condensation of 2 farnesyl pyrophosphate moieties to form squalene, which is the precursor of all steroids. Squalene synthase is crucial for balancing the incorporation of farnesyl diphosphate (FPP) into sterol and nonsterol isoprene synthesis. Secondly, squalene is converted into lanosterol by the consecutive action of the squalene epoxidase ERG1 and the lanosterol synthase ERG7. Then, the delta(24)-sterol C-methyltransferase ERG6 methylates lanosterol at C-24 to produce eburicol. Eburicol is the substrate of the sterol 14-alpha demethylase encoded by CYP51A, CYP51B and CYP51C, to yield 4,4,24-trimethyl ergosta-8,14,24(28)-trienol. CYP51B encodes the enzyme primarily responsible for sterol 14-alpha-demethylation, and plays an essential role in ascospore formation. CYP51A encodes an additional sterol 14-alpha-demethylase, induced on ergosterol depletion and responsible for the intrinsic variation in azole sensitivity. The third CYP51 isoform, CYP51C, does not encode a sterol 14-alpha-demethylase, but is required for full virulence on host wheat ears. The C-14 reductase ERG24 then reduces the C14=C15 double bond which leads to 4,4-dimethylfecosterol. A sequence of further demethylations at C-4, involving the C-4 demethylation complex containing the C-4 methylsterol oxidases ERG25, the sterol-4-alpha-carboxylate 3-dehydrogenase ERG26 and the 3-keto-steroid reductase ERG27, leads to the production of fecosterol via 4-methylfecosterol. ERG28 has a role as a scaffold to help anchor ERG25, ERG26 and ERG27 to the endoplasmic reticulum. The C-8 sterol isomerase ERG2 then catalyzes the reaction which results in unsaturation at C-7 in the B ring of sterols and thus converts fecosterol to episterol. The sterol-C5-desaturases ERG3A and ERG3BB then catalyze the introduction of a C-5 double bond in the B ring to produce 5-dehydroepisterol. The C-22 sterol desaturases ERG5A and ERG5B further convert 5-dehydroepisterol into ergosta-5,7,22,24(28)-tetraen-3beta-ol by forming the C-22(23) double bond in the sterol side chain. Finally, ergosta-5,7,22,24(28)-tetraen-3beta-ol is substrate of the C-24(28) sterol reductase ERG4 to produce ergosterol. The protein is Squalene epoxidase ERG1 of Gibberella zeae (strain ATCC MYA-4620 / CBS 123657 / FGSC 9075 / NRRL 31084 / PH-1) (Wheat head blight fungus).